We begin with the raw amino-acid sequence, 300 residues long: Phosphoribosylaminoimidazole-succinocarboxamide synthase (300 aa).

It belongs to the SAICAR synthetase family.

It catalyses the reaction 5-amino-1-(5-phospho-D-ribosyl)imidazole-4-carboxylate + L-aspartate + ATP = (2S)-2-[5-amino-1-(5-phospho-beta-D-ribosyl)imidazole-4-carboxamido]succinate + ADP + phosphate + 2 H(+). It functions in the pathway purine metabolism; IMP biosynthesis via de novo pathway; 5-amino-1-(5-phospho-D-ribosyl)imidazole-4-carboxamide from 5-amino-1-(5-phospho-D-ribosyl)imidazole-4-carboxylate: step 1/2. This chain is Phosphoribosylaminoimidazole-succinocarboxamide synthase, found in Methylibium petroleiphilum (strain ATCC BAA-1232 / LMG 22953 / PM1).